The chain runs to 450 residues: Signal recognition particle 54 kDa protein (450 aa).

GTP is bound by residues 107–114 (GIQGSGKT), 188–192 (DTAGR), and 247–250 (TKLD).

The protein belongs to the GTP-binding SRP family. SRP54 subfamily. As to quaternary structure, part of the signal recognition particle protein translocation system, which is composed of SRP and FtsY. Archaeal SRP consists of a 7S RNA molecule of 300 nucleotides and two protein subunits: SRP54 and SRP19.

The protein resides in the cytoplasm. The catalysed reaction is GTP + H2O = GDP + phosphate + H(+). Involved in targeting and insertion of nascent membrane proteins into the cytoplasmic membrane. Binds to the hydrophobic signal sequence of the ribosome-nascent chain (RNC) as it emerges from the ribosomes. The SRP-RNC complex is then targeted to the cytoplasmic membrane where it interacts with the SRP receptor FtsY. In Methanococcus maripaludis (strain C5 / ATCC BAA-1333), this protein is Signal recognition particle 54 kDa protein.